Reading from the N-terminus, the 448-residue chain is C4-dicarboxylate transport protein (448 aa).

A run of 9 helical transmembrane segments spans residues 9-29, 59-79, 91-111, 159-179, 203-223, 237-257, 312-332, 345-365, and 367-387; these read SLYFQVIVAIIAGILVGHFYP, LIKMIIAPVIFCTVVSGIAGM, VALLYFEVVSTIALLIGLLVI, AFANGEILQVLLFAIMFGFAL, IVNMIMKLAPIGAFGAMAFTI, LIICFYVTCLLFIFIVLGTIS, GYSFNLDGTSIYLTMAAIFIA, ITLLLVLLISSKGAAGVTGSG, and IVMAATLSAVGHIPVAGLALI.

Belongs to the dicarboxylate/amino acid:cation symporter (DAACS) (TC 2.A.23) family.

The protein localises to the cell inner membrane. In terms of biological role, responsible for the transport of dicarboxylates such as succinate, fumarate, and malate from the periplasm across the membrane. The chain is C4-dicarboxylate transport protein from Acinetobacter baylyi (strain ATCC 33305 / BD413 / ADP1).